Consider the following 98-residue polypeptide: N(2)-fixation sustaining protein CowN (98 aa).

Belongs to the CowN family.

Its function is as follows. Is required to sustain N(2)-dependent growth in the presence of low levels of carbon monoxide (CO). Probably acts by protecting the N(2) fixation ability of the nitrogenase complex, which is inactivated in the presence of CO. The chain is N(2)-fixation sustaining protein CowN from Azospirillum sp. (strain B510).